The primary structure comprises 764 residues: 1,4-alpha-glucan branching enzyme GlgB (764 aa).

Catalysis depends on D434, which acts as the Nucleophile. The active-site Proton donor is E487.

Belongs to the glycosyl hydrolase 13 family. GlgB subfamily. As to quaternary structure, monomer.

It catalyses the reaction Transfers a segment of a (1-&gt;4)-alpha-D-glucan chain to a primary hydroxy group in a similar glucan chain.. The protein operates within glycan biosynthesis; glycogen biosynthesis. In terms of biological role, catalyzes the formation of the alpha-1,6-glucosidic linkages in glycogen by scission of a 1,4-alpha-linked oligosaccharide from growing alpha-1,4-glucan chains and the subsequent attachment of the oligosaccharide to the alpha-1,6 position. This Nostoc sp. (strain PCC 7120 / SAG 25.82 / UTEX 2576) protein is 1,4-alpha-glucan branching enzyme GlgB.